The primary structure comprises 271 residues: Delta(3,5)-Delta(2,4)-dienoyl-CoA isomerase (271 aa).

Substrate-binding positions include 62–66 and Leu120; that span reads SGGKF. Glu152 acts as the Proton donor/acceptor in catalysis. The Peroxisome targeting signal (PTS1) signature appears at 269–271; that stretch reads HKL.

The protein belongs to the enoyl-CoA hydratase/isomerase family. Interacts with ECI1.

It localises to the peroxisome. It catalyses the reaction a (3E,5Z)-dienoyl-CoA = a (2E,4E)-(5,6-saturated)-dienoyl-CoA. Its pathway is lipid metabolism; fatty acid beta-oxidation. Peroxisomal di-isomerase that is involved in fatty acid metabolism enzyme by converting 3,5-dienoyl-CoAs to the corresponding 2,4-dienoyl-CoAs. Required for ECI1 to be located to the peroxisome. The polypeptide is Delta(3,5)-Delta(2,4)-dienoyl-CoA isomerase (Saccharomyces cerevisiae (strain ATCC 204508 / S288c) (Baker's yeast)).